Consider the following 611-residue polypeptide: UvrABC system protein C (611 aa).

Residues 6-84 (NNPGVYRMFN…IKRLRPRFNV (79 aa)) enclose the GIY-YIG domain. Residues 194 to 229 (QSVKDHLAAAMQAASADLDFEHAAVYRDRLAALSHV) form the UVR domain.

This sequence belongs to the UvrC family. As to quaternary structure, interacts with UvrB in an incision complex.

It localises to the cytoplasm. Its function is as follows. The UvrABC repair system catalyzes the recognition and processing of DNA lesions. UvrC both incises the 5' and 3' sides of the lesion. The N-terminal half is responsible for the 3' incision and the C-terminal half is responsible for the 5' incision. This is UvrABC system protein C from Brucella abortus (strain 2308).